Here is a 405-residue protein sequence, read N- to C-terminus: MKSSKNDTFVYRTWVKTLVVYFVMFVMSAVVPITAMFPNLGYPCYFNALVDYGALNLTNYNLAHHLTPTLYLEPPEMFVYITLVFIADCVAFIYYACGEVALIKARKKVSGLTDLSAWVSAVGSPTVLFLAILKLWSIQVFIQVLSYKHVFLSAFVYFLHFLASVLHACACVTRFSPVWVVKAQDNSIPQDTFLWWVVFYLKPVVTNLYLGCLALETLVFSLSVFLALGNSFYFMVGDMVLGAVNLFLILPIFWYILTEVWLASFMRHNFGFYCGMFIASIILILPLVRYEAVFVSAKLHTTVAINVAIIPILCSVAMLIRICRIFKSMRQGTDYVPVSETVELELESEPRPRPSRTPSPGRNRRRSSTSSSSSRSTRRQRPVSTQALVSSVLPMTTDSEEEIFP.

The Intravirion segment spans residues 1 to 17 (MKSSKNDTFVYRTWVKT). Residues 18–38 (LVVYFVMFVMSAVVPITAMFP) form a helical membrane-spanning segment. Over 39 to 76 (NLGYPCYFNALVDYGALNLTNYNLAHHLTPTLYLEPPE) the chain is Virion surface. Residues 77-97 (MFVYITLVFIADCVAFIYYAC) form a helical membrane-spanning segment. Residues 98–121 (GEVALIKARKKVSGLTDLSAWVSA) lie on the Intravirion side of the membrane. The chain crosses the membrane as a helical span at residues 122–142 (VGSPTVLFLAILKLWSIQVFI). The Virion surface portion of the chain corresponds to 143–149 (QVLSYKH). A helical transmembrane segment spans residues 150–170 (VFLSAFVYFLHFLASVLHACA). The Intravirion portion of the chain corresponds to 171-192 (CVTRFSPVWVVKAQDNSIPQDT). Residues 193–215 (FLWWVVFYLKPVVTNLYLGCLAL) form a helical membrane-spanning segment. Topologically, residues 216-245 (ETLVFSLSVFLALGNSFYFMVGDMVLGAVN) are virion surface. A helical membrane pass occupies residues 246–266 (LFLILPIFWYILTEVWLASFM). A topological domain (intravirion) is located at residue arginine 267. Residues 268–288 (HNFGFYCGMFIASIILILPLV) form a helical membrane-spanning segment. Residues 289 to 299 (RYEAVFVSAKL) lie on the Virion surface side of the membrane. Residues 300–320 (HTTVAINVAIIPILCSVAMLI) traverse the membrane as a helical segment. Over 321-405 (RICRIFKSMR…TTDSEEEIFP (85 aa)) the chain is Intravirion. Residues 346–405 (LESEPRPRPSRTPSPGRNRRRSSTSSSSSRSTRRQRPVSTQALVSSVLPMTTDSEEEIFP) form a disordered region. The segment covering 386 to 397 (QALVSSVLPMTT) has biased composition (polar residues).

It belongs to the herpesviridae glycoprotein M family. As to quaternary structure, interacts (via N-terminus) with gN (via N-terminus). The gM-gN heterodimer forms the gCII complex.

The protein resides in the virion membrane. It is found in the host Golgi apparatus. It localises to the host trans-Golgi network. The protein localises to the host endosome membrane. Its subcellular location is the host nucleus inner membrane. Functionally, envelope glycoprotein important for virion assembly and egress. Plays a role in the correct incorporation of gH-gL into virion membrane. Directs the glycoprotein N (gN) to the host trans-Golgi network. This is Envelope glycoprotein M from Epstein-Barr virus (strain GD1) (HHV-4).